Here is a 496-residue protein sequence, read N- to C-terminus: Glycerol kinase (496 aa).

Thr12 is a binding site for ADP. ATP contacts are provided by Thr12, Thr13, and Ser14. Residue Thr12 participates in sn-glycerol 3-phosphate binding. Arg16 is a binding site for ADP. Sn-glycerol 3-phosphate contacts are provided by Arg82, Glu83, and Tyr134. The glycerol site is built by Arg82, Glu83, and Tyr134. His230 bears the Phosphohistidine; by HPr mark. Asp244 provides a ligand contact to sn-glycerol 3-phosphate. 2 residues coordinate glycerol: Asp244 and Gln245. The ADP site is built by Thr266 and Gly309. ATP is bound by residues Thr266, Gly309, Gln313, and Gly410. 2 residues coordinate ADP: Gly410 and Asn414.

Belongs to the FGGY kinase family. Homotetramer and homodimer (in equilibrium). Post-translationally, the phosphoenolpyruvate-dependent sugar phosphotransferase system (PTS), including enzyme I, and histidine-containing protein (HPr) are required for the phosphorylation, which leads to the activation of the enzyme.

The catalysed reaction is glycerol + ATP = sn-glycerol 3-phosphate + ADP + H(+). The protein operates within polyol metabolism; glycerol degradation via glycerol kinase pathway; sn-glycerol 3-phosphate from glycerol: step 1/1. Activated by phosphorylation and inhibited by fructose 1,6-bisphosphate (FBP). Its function is as follows. Key enzyme in the regulation of glycerol uptake and metabolism. Catalyzes the phosphorylation of glycerol to yield sn-glycerol 3-phosphate. The sequence is that of Glycerol kinase from Bacillus velezensis (strain DSM 23117 / BGSC 10A6 / LMG 26770 / FZB42) (Bacillus amyloliquefaciens subsp. plantarum).